A 398-amino-acid chain; its full sequence is Acetate kinase (398 aa).

Position 8 (N8) interacts with Mg(2+). Position 15 (K15) interacts with ATP. R89 contacts substrate. D146 (proton donor/acceptor) is an active-site residue. ATP is bound by residues 206–210 (HIGNG), 281–283 (DLR), and 329–333 (GVGEN). Residue E383 coordinates Mg(2+).

Belongs to the acetokinase family. As to quaternary structure, homodimer. Requires Mg(2+) as cofactor. Mn(2+) serves as cofactor.

The protein localises to the cytoplasm. It carries out the reaction acetate + ATP = acetyl phosphate + ADP. Its pathway is metabolic intermediate biosynthesis; acetyl-CoA biosynthesis; acetyl-CoA from acetate: step 1/2. In terms of biological role, catalyzes the formation of acetyl phosphate from acetate and ATP. Can also catalyze the reverse reaction. The chain is Acetate kinase from Macrococcus caseolyticus (strain JCSC5402) (Macrococcoides caseolyticum).